The sequence spans 307 residues: Malate dehydrogenase (307 aa).

Residues 8–13 and aspartate 32 each bind NAD(+); that span reads GAGNVG. Substrate contacts are provided by arginine 81 and arginine 87. Residues asparagine 94 and 117-119 contribute to the NAD(+) site; that span reads VSN. Residues asparagine 119 and arginine 150 each coordinate substrate. Histidine 174 acts as the Proton acceptor in catalysis.

The protein belongs to the LDH/MDH superfamily. MDH type 3 family.

The catalysed reaction is (S)-malate + NAD(+) = oxaloacetate + NADH + H(+). Functionally, catalyzes the reversible oxidation of malate to oxaloacetate. The protein is Malate dehydrogenase of Dehalococcoides mccartyi (strain ATCC BAA-2100 / JCM 16839 / KCTC 5957 / BAV1).